A 247-amino-acid polypeptide reads, in one-letter code: Granulin (247 aa).

This sequence belongs to the polyhedrin family.

Functionally, component of the virus occlusion bodies, which are large proteinaceous structures, that protect the virus from the outside environment for extended periods until they are ingested by insect larvae. The sequence is that of Granulin from Pieris brassicae granulosis virus (PbGV).